Consider the following 105-residue polypeptide: Met repressor (105 aa).

Belongs to the MetJ family. In terms of assembly, homodimer.

The protein resides in the cytoplasm. Its function is as follows. This regulatory protein, when combined with SAM (S-adenosylmethionine) represses the expression of the methionine regulon and of enzymes involved in SAM synthesis. This chain is Met repressor, found in Haemophilus influenzae (strain 86-028NP).